Here is a 177-residue protein sequence, read N- to C-terminus: MFKELYKDSIVKSLKDKFNYGNIMQVPKLVKVCINMGVGDAATDSKAINEPLDSLYLIAGQKPLSTFAKKSISGFKIRKGATVGCKVTLRRDKMYEFLERLIYIALPREKDFRGFSVKQFDGNGNFSFGIKEHISFLEIDYDKISKIRGMDINIITSAVSDKEAKELLLALKFPFFD.

The protein belongs to the universal ribosomal protein uL5 family. As to quaternary structure, part of the 50S ribosomal subunit; part of the 5S rRNA/L5/L18/L25 subcomplex. Contacts the 5S rRNA and the P site tRNA. Forms a bridge to the 30S subunit in the 70S ribosome.

This is one of the proteins that bind and probably mediate the attachment of the 5S RNA into the large ribosomal subunit, where it forms part of the central protuberance. In the 70S ribosome it contacts protein S13 of the 30S subunit (bridge B1b), connecting the 2 subunits; this bridge is implicated in subunit movement. Contacts the P site tRNA; the 5S rRNA and some of its associated proteins might help stabilize positioning of ribosome-bound tRNAs. This chain is Large ribosomal subunit protein uL5, found in Wolbachia pipientis wMel.